The following is a 414-amino-acid chain: 3-oxoacyl-[acyl-carrier-protein] synthase 2 (414 aa).

The region spanning 4 to 411 (NKRVVITGMG…GHNAVLVFKK (408 aa)) is the Ketosynthase family 3 (KS3) domain. Residues C165, H304, and H341 each act as for beta-ketoacyl synthase activity in the active site.

This sequence belongs to the thiolase-like superfamily. Beta-ketoacyl-ACP synthases family.

The catalysed reaction is a fatty acyl-[ACP] + malonyl-[ACP] + H(+) = a 3-oxoacyl-[ACP] + holo-[ACP] + CO2. It carries out the reaction (9Z)-hexadecenoyl-[ACP] + malonyl-[ACP] + H(+) = 3-oxo-(11Z)-octadecenoyl-[ACP] + holo-[ACP] + CO2. It participates in lipid metabolism; fatty acid biosynthesis. Functionally, involved in the type II fatty acid elongation cycle. Catalyzes the elongation of a wide range of acyl-ACP by the addition of two carbons from malonyl-ACP to an acyl acceptor. Can efficiently catalyze the conversion of palmitoleoyl-ACP (cis-hexadec-9-enoyl-ACP) to cis-vaccenoyl-ACP (cis-octadec-11-enoyl-ACP), an essential step in the thermal regulation of fatty acid composition. The chain is 3-oxoacyl-[acyl-carrier-protein] synthase 2 (fabF) from Staphylococcus aureus (strain Mu50 / ATCC 700699).